The sequence spans 331 residues: Glyceraldehyde-3-phosphate dehydrogenase (331 aa).

NAD(+) contacts are provided by residues 12–13 (RI), Asp-34, Arg-78, and Thr-120. D-glyceraldehyde 3-phosphate is bound by residues 149–151 (SCT), Thr-180, 209–210 (TG), and Arg-232. Residue Cys-150 is the Nucleophile of the active site. Residue Asn-314 coordinates NAD(+).

It belongs to the glyceraldehyde-3-phosphate dehydrogenase family. Homotetramer.

The protein resides in the cytoplasm. It carries out the reaction D-glyceraldehyde 3-phosphate + phosphate + NAD(+) = (2R)-3-phospho-glyceroyl phosphate + NADH + H(+). The protein operates within carbohydrate degradation; glycolysis; pyruvate from D-glyceraldehyde 3-phosphate: step 1/5. Its function is as follows. Catalyzes the oxidative phosphorylation of glyceraldehyde 3-phosphate (G3P) to 1,3-bisphosphoglycerate (BPG) using the cofactor NAD. The first reaction step involves the formation of a hemiacetal intermediate between G3P and a cysteine residue, and this hemiacetal intermediate is then oxidized to a thioester, with concomitant reduction of NAD to NADH. The reduced NADH is then exchanged with the second NAD, and the thioester is attacked by a nucleophilic inorganic phosphate to produce BPG. The polypeptide is Glyceraldehyde-3-phosphate dehydrogenase (gapA) (Shimwellia blattae (strain ATCC 29907 / DSM 4481 / JCM 1650 / NBRC 105725 / CDC 9005-74) (Escherichia blattae)).